Here is a 653-residue protein sequence, read N- to C-terminus: 23S rRNA 5-hydroxycytidine C2501 synthase (653 aa).

The protein belongs to the peptidase U32 family. As to quaternary structure, interacts with precursors of the 50S ribosomal subunit.

With respect to regulation, iron-sulfur clusters and prephenate are required for ho5C2501 formation. In terms of biological role, responsible for the formation of the 5-hydroxycytidine modification at the C2501 position (ho5C2501) of 23S rRNA. May be a Fe-S protein that catalyzes ho5C2501 formation using prephenate as a hydroxyl group donor. This is 23S rRNA 5-hydroxycytidine C2501 synthase from Escherichia coli (strain K12).